The chain runs to 363 residues: MKESIRSKLENLVERLDEVNHLISDPEIINNQNKFRNLTKEHSQLTPVVETFNQFIQNQGDLQEAKDMIKSGDPDLKEMGQEELPELEKQQATLEAELQKMLLPKDPNDDANIFLEIRAGTGGDEAAIFAGDLFRMYSRYAETMRWQVEVINSQEGEHGGYKEIIARIIGDGAYSRLKFESGAHRVQRVPATETQGRVHTSAATVVIMPEAQDVEQIDLNPADLKVDTFRASGAGGQHVNKTDSAIRITHIPTGTVVECQDERSQHKNRARAMSLLASRIMDERQRIHDQEIAQERKSLVGSGDRSERIRTYNYPQGRVTDHRINLTLYKLDEIMQGGLQQVVDPLINEYQAEQLAALSEDSA.

N5-methylglutamine is present on glutamine 237.

Belongs to the prokaryotic/mitochondrial release factor family. In terms of processing, methylated by PrmC. Methylation increases the termination efficiency of RF1.

It localises to the cytoplasm. Peptide chain release factor 1 directs the termination of translation in response to the peptide chain termination codons UAG and UAA. The chain is Peptide chain release factor 1 from Hydrogenovibrio crunogenus (strain DSM 25203 / XCL-2) (Thiomicrospira crunogena).